The following is a 1097-amino-acid chain: DNA-directed RNA polymerase subunit beta (1097 aa).

The tract at residues 1072–1097 (QDVNPRRSTPSRPTYESLGVADYDED) is disordered.

Belongs to the RNA polymerase beta chain family. In terms of assembly, in cyanobacteria the RNAP catalytic core is composed of 2 alpha, 1 beta, 1 beta', 1 gamma and 1 omega subunit. When a sigma factor is associated with the core the holoenzyme is formed, which can initiate transcription.

It carries out the reaction RNA(n) + a ribonucleoside 5'-triphosphate = RNA(n+1) + diphosphate. DNA-dependent RNA polymerase catalyzes the transcription of DNA into RNA using the four ribonucleoside triphosphates as substrates. The sequence is that of DNA-directed RNA polymerase subunit beta from Synechococcus sp. (strain CC9902).